Consider the following 383-residue polypeptide: Anhydro-N-acetylmuramic acid kinase (383 aa).

Residue 9–16 coordinates ATP; it reads GTSVDSID.

The protein belongs to the anhydro-N-acetylmuramic acid kinase family.

The catalysed reaction is 1,6-anhydro-N-acetyl-beta-muramate + ATP + H2O = N-acetyl-D-muramate 6-phosphate + ADP + H(+). The protein operates within amino-sugar metabolism; 1,6-anhydro-N-acetylmuramate degradation. It participates in cell wall biogenesis; peptidoglycan recycling. In terms of biological role, catalyzes the specific phosphorylation of 1,6-anhydro-N-acetylmuramic acid (anhMurNAc) with the simultaneous cleavage of the 1,6-anhydro ring, generating MurNAc-6-P. Is required for the utilization of anhMurNAc either imported from the medium or derived from its own cell wall murein, and thus plays a role in cell wall recycling. The polypeptide is Anhydro-N-acetylmuramic acid kinase (Crocosphaera subtropica (strain ATCC 51142 / BH68) (Cyanothece sp. (strain ATCC 51142))).